The primary structure comprises 228 residues: Large ribosomal subunit protein uL23m (228 aa).

The segment at 194–228 (PEEEGWSEVEENLPLDESAESAAEESSSKGSETRQ) is disordered. Over residues 195–216 (EEEGWSEVEENLPLDESAESAA) the composition is skewed to acidic residues.

This sequence belongs to the universal ribosomal protein uL23 family. As to quaternary structure, component of the mitochondrial large ribosomal subunit (mt-LSU). Mature N.crassa 74S mitochondrial ribosomes consist of a small (37S) and a large (54S) subunit. The 37S small subunit contains a 16S ribosomal RNA (16S mt-rRNA) and 32 different proteins. The 54S large subunit contains a 23S rRNA (23S mt-rRNA) and 42 different proteins. uL23m forms the wall of the exit tunnel.

It localises to the mitochondrion. Its function is as follows. Component of the mitochondrial ribosome (mitoribosome), a dedicated translation machinery responsible for the synthesis of mitochondrial genome-encoded proteins, including at least some of the essential transmembrane subunits of the mitochondrial respiratory chain. The mitoribosomes are attached to the mitochondrial inner membrane and translation products are cotranslationally integrated into the membrane. The chain is Large ribosomal subunit protein uL23m (mrp20) from Neurospora crassa (strain ATCC 24698 / 74-OR23-1A / CBS 708.71 / DSM 1257 / FGSC 987).